Here is a 155-residue protein sequence, read N- to C-terminus: Small ribosomal subunit protein uS7 (155 aa).

It belongs to the universal ribosomal protein uS7 family. As to quaternary structure, part of the 30S ribosomal subunit. Contacts proteins S9 and S11.

In terms of biological role, one of the primary rRNA binding proteins, it binds directly to 16S rRNA where it nucleates assembly of the head domain of the 30S subunit. Is located at the subunit interface close to the decoding center, probably blocks exit of the E-site tRNA. This is Small ribosomal subunit protein uS7 from Xanthomonas axonopodis pv. citri (strain 306).